The sequence spans 452 residues: Xaa-Pro dipeptidase 1 (452 aa).

The Mn(2+) site is built by D247, D258, H338, E383, and E422.

Belongs to the peptidase M24B family. Bacterial-type prolidase subfamily. Requires Mn(2+) as cofactor.

It catalyses the reaction Xaa-L-Pro dipeptide + H2O = an L-alpha-amino acid + L-proline. Its function is as follows. Splits dipeptides with a prolyl residue in the C-terminal position. The sequence is that of Xaa-Pro dipeptidase 1 from Idiomarina loihiensis (strain ATCC BAA-735 / DSM 15497 / L2-TR).